Here is a 586-residue protein sequence, read N- to C-terminus: Arginine--tRNA ligase (586 aa).

The 'HIGH' region motif lies at 131-141 (ANPTGPMHVGH).

It belongs to the class-I aminoacyl-tRNA synthetase family. In terms of assembly, monomer.

Its subcellular location is the cytoplasm. It carries out the reaction tRNA(Arg) + L-arginine + ATP = L-arginyl-tRNA(Arg) + AMP + diphosphate. The protein is Arginine--tRNA ligase of Xanthobacter autotrophicus (strain ATCC BAA-1158 / Py2).